A 420-amino-acid chain; its full sequence is Zinc finger protein Pegasus (420 aa).

Lys-5 is covalently cross-linked (Glycyl lysine isopeptide (Lys-Gly) (interchain with G-Cter in SUMO2)). 3 consecutive C2H2-type zinc fingers follow at residues 82–104 (LKCRYCNYASKGTARLIEHIRIH), 110–132 (HRCHLCPFASAYERHLEAHMRSH), and 138–161 (YKCELCSFRCSDRSNLSHHRRRKH). Residue Lys-185 forms a Glycyl lysine isopeptide (Lys-Gly) (interchain with G-Cter in SUMO2) linkage. Composition is skewed to polar residues over residues 223–236 (QTDSYESMAKTTPT) and 262–273 (LSSLPPENQNPA). Disordered stretches follow at residues 223–247 (QTDSYESMAKTTPTGGLPRDPQELM) and 262–356 (LSSL…PALP). Positions 290 to 311 (QPSTQAVVSAVSASIPQSSSPT) are enriched in low complexity. Residues 332–349 (SEPSAHTSTPSIGNSQPS) are compositionally biased toward polar residues. A C2H2-type 4; degenerate zinc finger spans residues 364–387 (HHCQHCDMYFFADNILYTIHMGCH). The C2H2-type 5 zinc finger occupies 393 to 417 (FQCNICGCKCKNKYDFACHFARGQH).

It belongs to the Ikaros C2H2-type zinc-finger protein family. Self-associates. Interacts with other family members; IKZF1, IKZF2, IKZF3 and IKZF4.

The protein resides in the nucleus. Transcriptional repressor that binds the core 5'GNNTGTNG-3' DNA consensus sequence. Involved in megakaryocyte differentiation. The protein is Zinc finger protein Pegasus (IKZF5) of Pongo abelii (Sumatran orangutan).